The primary structure comprises 363 residues: Phosphoserine aminotransferase (363 aa).

Arg42 is an L-glutamate binding site. Pyridoxal 5'-phosphate-binding positions include 76-77, Trp104, Thr155, Asp175, and Gln198; that span reads AR. Lys199 is subject to N6-(pyridoxal phosphate)lysine. 240–241 provides a ligand contact to pyridoxal 5'-phosphate; it reads NT.

Belongs to the class-V pyridoxal-phosphate-dependent aminotransferase family. SerC subfamily. As to quaternary structure, homodimer. The cofactor is pyridoxal 5'-phosphate.

It localises to the cytoplasm. It catalyses the reaction O-phospho-L-serine + 2-oxoglutarate = 3-phosphooxypyruvate + L-glutamate. It carries out the reaction 4-(phosphooxy)-L-threonine + 2-oxoglutarate = (R)-3-hydroxy-2-oxo-4-phosphooxybutanoate + L-glutamate. It participates in amino-acid biosynthesis; L-serine biosynthesis; L-serine from 3-phospho-D-glycerate: step 2/3. The protein operates within cofactor biosynthesis; pyridoxine 5'-phosphate biosynthesis; pyridoxine 5'-phosphate from D-erythrose 4-phosphate: step 3/5. Its function is as follows. Catalyzes the reversible conversion of 3-phosphohydroxypyruvate to phosphoserine and of 3-hydroxy-2-oxo-4-phosphonooxybutanoate to phosphohydroxythreonine. This Edwardsiella ictaluri (strain 93-146) protein is Phosphoserine aminotransferase (serC).